Consider the following 164-residue polypeptide: D-aminoacyl-tRNA deacylase (164 aa).

TRNA contacts are provided by Trp72 and Phe89. The Nucleophile role is filled by Thr90. The short motif at 104-107 (HLAK) is the C-terminal adenosine nucleotide of tRNA element. The short motif at 149-150 (GP) is the Gly-cisPro motif, allows the protein to recognize chirality of D-amino acids element.

Belongs to the DTD family. As to quaternary structure, homodimer.

The protein resides in the cytoplasm. It carries out the reaction glycyl-tRNA(Ala) + H2O = tRNA(Ala) + glycine + H(+). The catalysed reaction is a D-aminoacyl-tRNA + H2O = a tRNA + a D-alpha-amino acid + H(+). It catalyses the reaction D-tyrosyl-tRNA(Tyr) + H2O = D-tyrosine + tRNA(Tyr). Its function is as follows. D-aminoacyl-tRNA deacylase, with no observable activity on tRNAs charged with their cognate L-amino acid. Probably acts by rejecting L-amino acids from its binding site rather than specific recognition of D-amino acids. Catalyzes the hydrolysis of D-tyrosyl-tRNA(Tyr), has no activity on correctly charged L-tyrosyl-tRNA(Tyr). Hydrolyzes correctly charged, achiral, glycyl-tRNA(Gly). Deacylates mischarged D.melanogaster and E.coli glycyl-tRNA(Ala). Probably acts via tRNA-based rather than protein-based catalysis. Acts on tRNAs only when the D-amino acid is either attached to the ribose 3'-OH or transferred to the 3'-OH from the 2'-OH through rapid transesterification. Binds a number of other D-amino acids (D-Arg, D-Glu, D-His, D-Lys, D-Ser), suggesting it may also deacylate other mischarged tRNAs. This is D-aminoacyl-tRNA deacylase from Plasmodium falciparum (isolate 3D7).